The sequence spans 678 residues: Protein distal antenna (678 aa).

Residues 7–58 (TKGKRPLRSLTPRDKIHAIQRIHDGESKASVARDIGVPESTLRGWCKNEDKL) form the HTH psq-type domain. The H-T-H motif DNA-binding region spans 34-54 (KASVARDIGVPESTLRGWCKN). 5 disordered regions span residues 232 to 310 (GAGN…GGPM), 344 to 381 (GVTS…PSGS), 445 to 528 (KETE…TSEC), 541 to 592 (GMEA…DEEE), and 645 to 678 (NETP…RRRK). Polar residues-rich tracts occupy residues 241–254 (PSGQ…SPRS) and 349–363 (PIRS…QLAQ). 2 positions are modified to phosphoserine: S251 and S254. Low complexity predominate over residues 372–381 (LTPSSTPSGS). Residues 449-461 (TPSVRSLSSNEQN) show a composition bias toward polar residues. Residues 462-478 (PEADEATETDLDGEVEP) show a composition bias toward acidic residues. Positions 495 to 508 (TPSQSPIAHSSGSR) are enriched in polar residues. A compositionally biased stretch (low complexity) spans 570–586 (NNNDVSASNNNNNNNSN). The segment covering 657–667 (EDSEEHAAEEE) has biased composition (acidic residues).

Homomers. Interacts with itself, danr, ey and dac to form a complex (or complexes) containing the RD factors. In terms of tissue distribution, coexpressed with danr in the presumptive distal antenna, but not in the leg imaginal disk. Both proteins are also expressed in the brain and the eye region of the eye-antenna disk. First detected in early L3 eye disks in cells surrounding the newly initiated MF. Levels are uniform and high anterior to the furrow, lower levels within and posterior to the furrow. Limited expression is seen in small groups of cells in leg and wing. These appear in the location of prominent sense organ progenitors at relatively late stages of disk development.

It localises to the nucleus. In terms of biological role, probable transcription factor with a role in the retinal determination (RD) network. Regulates ato expression and is required for normal R8 induction and differentiation. Danr appears to repress Dan expression, but Dan is required for Danr expression anterior to the morphogenetic furrow (MF). Dan and Danr lie downstream of so and require dac function for highest levels of expression. Contributes to differentiation of antenna-specific characteristics; effector gene that acts downstream of homothorax (hth), Distal-less (Dll), cut (ct) and spineless (ss) genes to control differentiation of distal antennal structures. In Drosophila melanogaster (Fruit fly), this protein is Protein distal antenna.